The primary structure comprises 185 residues: Elongation factor P (185 aa).

It belongs to the elongation factor P family.

The protein resides in the cytoplasm. It functions in the pathway protein biosynthesis; polypeptide chain elongation. Involved in peptide bond synthesis. Stimulates efficient translation and peptide-bond synthesis on native or reconstituted 70S ribosomes in vitro. Probably functions indirectly by altering the affinity of the ribosome for aminoacyl-tRNA, thus increasing their reactivity as acceptors for peptidyl transferase. This Lysinibacillus sphaericus (strain C3-41) protein is Elongation factor P.